Reading from the N-terminus, the 301-residue chain is Homoserine O-acetyltransferase (301 aa).

Catalysis depends on Cys-142, which acts as the Acyl-thioester intermediate. Substrate contacts are provided by Lys-163 and Ser-192. Catalysis depends on His-235, which acts as the Proton acceptor. Residue Glu-237 is part of the active site. Arg-249 contacts substrate.

Belongs to the MetA family.

The protein localises to the cytoplasm. It carries out the reaction L-homoserine + acetyl-CoA = O-acetyl-L-homoserine + CoA. Its pathway is amino-acid biosynthesis; L-methionine biosynthesis via de novo pathway; O-acetyl-L-homoserine from L-homoserine: step 1/1. In terms of biological role, transfers an acetyl group from acetyl-CoA to L-homoserine, forming acetyl-L-homoserine. The protein is Homoserine O-acetyltransferase of Bacillus mycoides (strain KBAB4) (Bacillus weihenstephanensis).